Here is a 1058-residue protein sequence, read N- to C-terminus: MEANQAGSGAGGGGSSGIGGEDGVHFQSYPFDFLEFLNHQRFEPMELYGEHAKAVAALPCTPGPPPQPPPQPPPPQYDYPPQSSFKPKAEAPSSSSSSSSSSSSSSSSSSSSSQAKKMDPPLPPTFGAPPPPLFDAAFPAPQWGIVDLSGHQHLFGNLKRGGPTPGPGVASGLGTPTGTPGPLTTPSQTPPGPAVGAACDPTKDDKGYFRRLKYLMERRFPCGVCQKSFKQSSHLVQHMLVHSGERPYECGICGRTYNHVSSLIRHRRCHKDVPPTPTGGTPQPGPALPSLGLPVSTASATASSDPAAVSSGPSATPATPATSTDGNTTPAAPPGVAMPPSATTGGDGPFACSLCWKVFKKPSHLHQHQIIHTGEKPFSCSVCSKSFNRRESLKRHVKTHSADLLRLPCGICGKVFRDASYLLKHQAAHAAAGTPRPVYPCDLCGKTYSAPQSLLRHKAAHAPPVATEPAKDGAASVPQPPPPFPPGPYLLPADPSTTDEKATAAAAAVVYGAVPVPLLSAHPLLLGGAGNGGAGGPGAGGPSKTFCCGICGRAFGRRETLKRHERIHTGEKPHQCPVCGKRFRESFHLSKHHVVHTRERPYKCELCGKVFGYPQSLTRHRQVHRLQLPCALAGATGLATGQGTTGACGPGAAGTSGGPADLSYACSDCGEHFPDLFHVMSHKEAHMSEKPYGCDACGKTFGFIENLMWHKLVHQAAPERLLAPTPSGPQSSDGGSSGGGTDASSVLDNGLAGEVGTAVAALAGVSGGSEDAGGATVAGSGGGTSSGAERFSCATCGQSFKHFLGLVTHKYVHLVRRTLGCGLCGQSFAGAYDLLLHRRSHRQKRGFRCPVCGKRFWEAALLMRHQRCHTEQRPYRCGVCGRGFLRSWYLRQHRVVHTGERAFKCGVCAKHFAQSSSLAEHRRLHAVARPQRCGACGKTFRYRSNLLEHQRLHLGERAYRCEHCGKGFFYLSSVLRHQRAHEPPRPELRCPACLKAFKDPGYFRKHLAAHQGGRPFRCSSCGEGFANTYGLKKHRLMHKAEGLGMPGTGGSALAGKDP.

Disordered regions lie at residues 1 to 24 (MEAN…EDGV), 58 to 134 (LPCT…PPLF), and 156 to 201 (GNLK…ACDP). A compositionally biased stretch (gly residues) spans 8–21 (SGAGGGGSSGIGGE). Residues 61–78 (TPGPPPQPPPQPPPPQYD) show a composition bias toward pro residues. Positions 93-113 (SSSSSSSSSSSSSSSSSSSSS) are enriched in low complexity. The span at 120 to 133 (PPLPPTFGAPPPPL) shows a compositional bias: pro residues. Residues 172–187 (GLGTPTGTPGPLTTPS) show a composition bias toward low complexity. C2H2-type zinc fingers lie at residues 220–242 (FPCG…MLVH) and 248–270 (YECG…RRCH). The segment at 269–342 (CHKDVPPTPT…PPGVAMPPSA (74 aa)) is disordered. Low complexity predominate over residues 294–324 (PVSTASATASSDPAAVSSGPSATPATPATST). C2H2-type zinc fingers lie at residues 350 to 372 (FACS…QIIH), 378 to 400 (FSCS…VKTH), 407 to 429 (LPCG…QAAH), 439 to 461 (YPCD…KAAH), 546 to 568 (FCCG…ERIH), 574 to 596 (HQCP…HVVH), 602 to 624 (YKCE…RQVH), 664 to 686 (YACS…KEAH), and 692 to 714 (YGCD…KLVH). The segment at 459–486 (AAHAPPVATEPAKDGAASVPQPPPPFPP) is disordered. The disordered stretch occupies residues 721–743 (LLAPTPSGPQSSDGGSSGGGTDA). 9 consecutive C2H2-type zinc fingers follow at residues 791 to 813 (FSCA…KYVH), 819 to 841 (LGCG…RRSH), 847 to 869 (FRCP…QRCH), 875 to 897 (YRCG…RVVH), 903 to 925 (FKCG…RRLH), 931 to 953 (QRCG…QRLH), 959 to 981 (YRCE…QRAH), 988 to 1010 (LRCP…LAAH), and 1016 to 1038 (FRCS…RLMH). A Glycyl lysine isopeptide (Lys-Gly) (interchain with G-Cter in SUMO2) cross-link involves residue Lys-801. Lys-1039 participates in a covalent cross-link: Glycyl lysine isopeptide (Lys-Gly) (interchain with G-Cter in SUMO2).

It belongs to the krueppel C2H2-type zinc-finger protein family.

The protein localises to the nucleus. In terms of biological role, may be involved in transcriptional regulation. This chain is Zinc finger protein 865 (Znf865), found in Mus musculus (Mouse).